A 183-amino-acid chain; its full sequence is MAYTPRLKEEYKSRVISALKEEFGYTNVMQVPKLEKIVLSRGVGAAVSDKKLIDYAVDELTKITGQKAVSTISKKDVASFKLRKGMPIGAKVTLRGERMYEFLDRLITSALPRVRDFGGIKATGFDGRGNYNLGVLEQIIFPEIDIDKVNKISGMDITFVTTAKTDKEAKSLLAELGLPFKKN.

Belongs to the universal ribosomal protein uL5 family. In terms of assembly, part of the 50S ribosomal subunit; part of the 5S rRNA/L5/L18/L25 subcomplex. Contacts the 5S rRNA and the P site tRNA. Forms a bridge to the 30S subunit in the 70S ribosome.

This is one of the proteins that bind and probably mediate the attachment of the 5S RNA into the large ribosomal subunit, where it forms part of the central protuberance. In the 70S ribosome it contacts protein S13 of the 30S subunit (bridge B1b), connecting the 2 subunits; this bridge is implicated in subunit movement. Contacts the P site tRNA; the 5S rRNA and some of its associated proteins might help stabilize positioning of ribosome-bound tRNAs. The protein is Large ribosomal subunit protein uL5 of Flavobacterium johnsoniae (strain ATCC 17061 / DSM 2064 / JCM 8514 / BCRC 14874 / CCUG 350202 / NBRC 14942 / NCIMB 11054 / UW101) (Cytophaga johnsonae).